The following is a 264-amino-acid chain: S-adenosylmethionine decarboxylase proenzyme (264 aa).

Ser-111 acts as the Schiff-base intermediate with substrate; via pyruvic acid in catalysis. Ser-111 bears the Pyruvic acid (Ser); by autocatalysis mark. His-116 (proton acceptor; for processing activity) is an active-site residue. The Proton donor; for catalytic activity role is filled by Cys-139.

Belongs to the prokaryotic AdoMetDC family. Type 2 subfamily. Heterooctamer of four alpha and four beta chains arranged as a tetramer of alpha/beta heterodimers. Pyruvate is required as a cofactor. Post-translationally, is synthesized initially as an inactive proenzyme. Formation of the active enzyme involves a self-maturation process in which the active site pyruvoyl group is generated from an internal serine residue via an autocatalytic post-translational modification. Two non-identical subunits are generated from the proenzyme in this reaction, and the pyruvate is formed at the N-terminus of the alpha chain, which is derived from the carboxyl end of the proenzyme. The post-translation cleavage follows an unusual pathway, termed non-hydrolytic serinolysis, in which the side chain hydroxyl group of the serine supplies its oxygen atom to form the C-terminus of the beta chain, while the remainder of the serine residue undergoes an oxidative deamination to produce ammonia and the pyruvoyl group blocking the N-terminus of the alpha chain.

The enzyme catalyses S-adenosyl-L-methionine + H(+) = S-adenosyl 3-(methylsulfanyl)propylamine + CO2. It participates in amine and polyamine biosynthesis; S-adenosylmethioninamine biosynthesis; S-adenosylmethioninamine from S-adenosyl-L-methionine: step 1/1. Catalyzes the decarboxylation of S-adenosylmethionine to S-adenosylmethioninamine (dcAdoMet), the propylamine donor required for the synthesis of the polyamines spermine and spermidine from the diamine putrescine. In Geobacillus kaustophilus (strain HTA426), this protein is S-adenosylmethionine decarboxylase proenzyme.